We begin with the raw amino-acid sequence, 589 residues long: Probable translation initiation factor IF-2 (589 aa).

The tr-type G domain occupies 14–231; sequence LRQPIVCVLG…GLAQRFLESE (218 aa). The tract at residues 23 to 30 is G1; it reads GHVDHGKT. A GTP-binding site is contributed by 23–30; sequence GHVDHGKT. A G2 region spans residues 48–52; the sequence is GITQR. The interval 84 to 87 is G3; it reads DTPG. Residues 84–88 and 138–141 each bind GTP; these read DTPGH and NKID. Residues 138-141 are G4; sequence NKID. The tract at residues 206 to 208 is G5; that stretch reads SAK.

The protein belongs to the TRAFAC class translation factor GTPase superfamily. Classic translation factor GTPase family. IF-2 subfamily.

In terms of biological role, function in general translation initiation by promoting the binding of the formylmethionine-tRNA to ribosomes. Seems to function along with eIF-2. This Thermoplasma volcanium (strain ATCC 51530 / DSM 4299 / JCM 9571 / NBRC 15438 / GSS1) protein is Probable translation initiation factor IF-2.